Here is a 206-residue protein sequence, read N- to C-terminus: Recombination protein RecR (206 aa).

Residues 58 to 73 (CENCHNISDVAVCEIC) form a C4-type zinc finger. One can recognise a Toprim domain in the interval 81-176 (QIVCVVEDVR…ITSSIARGIS (96 aa)).

The protein belongs to the RecR family.

Functionally, may play a role in DNA repair. It seems to be involved in an RecBC-independent recombinational process of DNA repair. It may act with RecF and RecO. The chain is Recombination protein RecR from Flavobacterium psychrophilum (strain ATCC 49511 / DSM 21280 / CIP 103535 / JIP02/86).